Here is a 278-residue protein sequence, read N- to C-terminus: Dehydrogenase/reductase SDR family member 4 (278 aa).

36–60 (LVTASTDGIGFAIARRLAQDGAHVV) is an NADP(+) binding site. N6-acetyllysine; alternate is present on lysine 92. At lysine 92 the chain carries N6-succinyllysine; alternate. An N6-acetyllysine modification is found at lysine 105. Residue serine 169 coordinates substrate. Tyrosine 182 acts as the Proton acceptor in catalysis. Residue lysine 186 participates in NADP(+) binding. An N6-acetyllysine; alternate modification is found at lysine 216. Lysine 216 is modified (N6-succinyllysine; alternate). Position 220 is a phosphoserine (serine 220). Residues lysine 227 and lysine 234 each carry the N6-succinyllysine modification. A Peroxisomal targeting signal motif is present at residues 276-278 (SRL).

Belongs to the short-chain dehydrogenases/reductases (SDR) family. As to quaternary structure, homotetramer.

It localises to the peroxisome. It carries out the reaction a secondary alcohol + NADP(+) = a ketone + NADPH + H(+). It catalyses the reaction 3beta-hydroxy-5beta-pregnane-20-one + NADP(+) = 5beta-pregnan-3,20-dione + NADPH + H(+). The catalysed reaction is 5beta-dihydrotestosterone + NADPH + H(+) = 5beta-androstane-3beta,17beta-diol + NADP(+). The enzyme catalyses 5beta-androstane-3,17-dione + NADPH + H(+) = 3beta-hydroxy-5beta-androstane-17-one + NADP(+). It carries out the reaction isatin + NADPH + H(+) = 3-hydroxyindolin-2-one + NADP(+). It catalyses the reaction lithocholate + NADP(+) = 3-oxo-5beta-cholan-24-oate + NADPH + H(+). The catalysed reaction is 3-oxo-5beta-cholan-24-oate + NADPH + H(+) = isolithocholate + NADP(+). In terms of biological role, NADPH-dependent oxidoreductase which catalyzes the reduction of a variety of compounds bearing carbonyl groups including ketosteroids, alpha-dicarbonyl compounds, aldehydes, aromatic ketones and quinones. Reduces 3-ketosteroids and benzil into 3beta-hydroxysteroids and R-benzoin, respectively, in contrast to the stereoselectivity of non-primate DHRS4s which produce 3alpha-hydroxysteroids and S-benzoin. Diplays low activity toward all-trans-retinal and no activity toward 9-cis-retinal as compared to non-primate mammals. In the reverse reaction, catalyze the NAD-dependent oxidation of 3beta-hydroxysteroids and alcohol, but with much lower efficiency. Involved in the metabolism of 3beta-hydroxysteroids, isatin and xenobiotic carbonyl compounds. The protein is Dehydrogenase/reductase SDR family member 4 (DHRS4) of Pongo abelii (Sumatran orangutan).